The primary structure comprises 79 residues: Putative membrane protein insertion efficiency factor (79 aa).

Belongs to the UPF0161 family.

The protein localises to the cell inner membrane. Could be involved in insertion of integral membrane proteins into the membrane. This chain is Putative membrane protein insertion efficiency factor, found in Prochlorococcus marinus (strain NATL2A).